A 349-amino-acid polypeptide reads, in one-letter code: Probable transporter vicT (349 aa).

The EamA domain maps to 25-153; that stretch reads IAAALLHALA…TALAGVVLVL (129 aa). The next 9 membrane-spanning stretches (helical) occupy residues 49–69, 89–109, 111–131, 133–153, 179–199, 215–235, 244–264, 269–289, and 294–314; these read PFTV…AYLW, AAGG…LSLS, ATVL…YWEG, TFAF…VLVL, LKGV…FSAM, FGVS…EVVW, LLAI…AGLG, RVTI…WAIW, and NVLT…PYLF.

It belongs to the TPT transporter family. SLC35D subfamily.

It localises to the membrane. Functionally, probable transporter; part of the gene cluster that mediates the biosynthesis of the secondary metabolite victorin, the molecular basis for Victoria blight of oats. The protein is Probable transporter vicT of Bipolaris victoriae (strain FI3) (Victoria blight of oats agent).